The following is a 534-amino-acid chain: Zinc finger protein 703-A (534 aa).

Disordered regions lie at residues 1 to 35 (MNCSPPGSSTDTERQSSSSGTPATPCPTLAPTHPV), 90 to 251 (SQIG…VAPV), and 300 to 320 (QLPGTLGLPGKPPSSSPLTGA). Low complexity-rich tracts occupy residues 15 to 34 (QSSSSGTPATPCPTLAPTHP), 115 to 124 (RSSSLKLGES), and 146 to 155 (GSSAGGSADK). The segment covering 173 to 182 (SPSSRVSSPG) has biased composition (polar residues). Residues 185–200 (CDSKNNESQEKKEPEA) are compositionally biased toward basic and acidic residues. Residues 204-217 (SLETSQANPTLTRA) are compositionally biased toward polar residues. The segment covering 218 to 229 (SISNSSAESSQS) has biased composition (low complexity). Positions 230 to 239 (GDVTPSSKSD) are enriched in polar residues. The C2H2-type zinc finger occupies 406-434 (HICNWVSASGPCDKRFATSEELLAHLRTH).

This sequence belongs to the Elbow/Noc family.

The protein localises to the nucleus. It is found in the cytoplasm. Its function is as follows. Transcriptional corepressor which does not bind directly to DNA and may regulate transcription through recruitment of histone deacetylases to gene promoters. Regulates cell adhesion, migration and proliferation. Involved in specification of the lateral neural plate border (NPB). May be required for segmental gene expression during hindbrain development. The protein is Zinc finger protein 703-A (znf703-a) of Xenopus laevis (African clawed frog).